Reading from the N-terminus, the 341-residue chain is Phenazine O-methyltransferase PhzM (341 aa).

S-adenosyl-L-methionine contacts are provided by residues aspartate 205 and 231–233; that span reads GDF. Histidine 251 serves as the catalytic Proton acceptor.

This sequence belongs to the class I-like SAM-binding methyltransferase superfamily. Cation-independent O-methyltransferase family. In terms of assembly, homodimer.

The enzyme catalyses 1,6-dihydroxyphenazine + S-adenosyl-L-methionine = 1-hydroxy-6-methoxyphenazine + S-adenosyl-L-homocysteine + H(+). The catalysed reaction is 1-hydroxy-6-methoxyphenazine + S-adenosyl-L-methionine = 1,6-dimethoxyphenazine + S-adenosyl-L-homocysteine + H(+). It carries out the reaction 1-hydroxy-6-methoxyphenazine N(10)-oxide + S-adenosyl-L-methionine = 1,6-dimethoxyphenazine N(5)-oxide + S-adenosyl-L-homocysteine. It catalyses the reaction 1,6-dihydroxyphenazine N(5),N(10)-dioxide + S-adenosyl-L-methionine = 1-hydroxy-6-methoxyphenazine N(5),N(10)-dioxide + S-adenosyl-L-homocysteine. The enzyme catalyses 1-hydroxy-6-methoxyphenazine N(5),N(10)-dioxide + S-adenosyl-L-methionine = 1,6-dimethoxyphenazine N(5),N(10)-dioxide + S-adenosyl-L-homocysteine. Its function is as follows. Involved in the biosynthesis of phenazine natural products including myxin, an N(5),N(10)-dioxide phenazine antiobiotic, which has antimicrobial activity. O-methyltransferase, which converts iodinin (1,6-dihydroxyphenazine N(5),N(10)-dioxide) to myxin (1-hydroxy-6-methoxyphenazine N(5),N(10)-dioxide). Catalyzes both monomethoxy and dimethoxy formation of phenazine natural compounds. Acts on a wide variety of substrates, catalyzing O-methylation of phenazines with non-, mono- or di-N-oxide. Highest activity with 1,6-dihydroxyphenazine (DHP) as substrate. Less active with monohydroxy-containing and monohydroxy-monomethoxy-containing phenazines. Least active with non-phenazine substrates, such as 8-hydroxyquinoline and 6-hydroxyquinoline. Is not able to convert 1-hydroxyphenazine to 1-hydroxy-N5-methylphenazine (pyocyanine), hence does not function as an N-methyltransferase. The protein is Phenazine O-methyltransferase PhzM of Lysobacter antibioticus.